A 237-amino-acid chain; its full sequence is Ribonuclease PH (237 aa).

Residues arginine 86 and 124 to 126 (GTR) contribute to the phosphate site.

This sequence belongs to the RNase PH family. In terms of assembly, homohexameric ring arranged as a trimer of dimers.

It carries out the reaction tRNA(n+1) + phosphate = tRNA(n) + a ribonucleoside 5'-diphosphate. Functionally, phosphorolytic 3'-5' exoribonuclease that plays an important role in tRNA 3'-end maturation. Removes nucleotide residues following the 3'-CCA terminus of tRNAs; can also add nucleotides to the ends of RNA molecules by using nucleoside diphosphates as substrates, but this may not be physiologically important. Probably plays a role in initiation of 16S rRNA degradation (leading to ribosome degradation) during starvation. The polypeptide is Ribonuclease PH (Bradyrhizobium diazoefficiens (strain JCM 10833 / BCRC 13528 / IAM 13628 / NBRC 14792 / USDA 110)).